Here is a 216-residue protein sequence, read N- to C-terminus: Lipoprotein-releasing system ATP-binding protein LolD (216 aa).

Positions 2-216 (IHLEGITKSF…TIHMVDGNII (215 aa)) constitute an ABC transporter domain. 34-41 (GPSGAGKT) provides a ligand contact to ATP.

It belongs to the ABC transporter superfamily. Lipoprotein translocase (TC 3.A.1.125) family. As to quaternary structure, the complex is composed of two ATP-binding proteins (LolD) and two transmembrane proteins (LolC and LolE).

Its subcellular location is the cell inner membrane. Part of the ABC transporter complex LolCDE involved in the translocation of mature outer membrane-directed lipoproteins, from the inner membrane to the periplasmic chaperone, LolA. Responsible for the formation of the LolA-lipoprotein complex in an ATP-dependent manner. The protein is Lipoprotein-releasing system ATP-binding protein LolD of Bacteroides fragilis (strain YCH46).